A 627-amino-acid chain; its full sequence is Protein EXECUTER 2, chloroplastic (627 aa).

Disordered regions lie at residues 1–34, 212–277, and 308–359; these read MSAA…PSAA, PTKG…AKDS, and EAEL…SKSP. A chloroplast-targeting transit peptide spans 1 to 45; that stretch reads MSAATACASPAAARPPLHIPLRSPPSAAHLPSAAASRRASSAACR. Low complexity predominate over residues 217-229; sequence SSASSVSSATAES. Acidic residues-rich tracts occupy residues 308–321 and 331–353; these read EAEL…ELVQ and SLED…SDSA.

It localises to the plastid. It is found in the chloroplast. Functionally, together with EX1, enables higher plants to perceive singlet oxygen as a stress signal in plastid that activates a genetically determined nuclear stress response program which triggers a programmed cell death (PCD). This transfer of singlet oxygen-induced stress-related signals from the plastid to the nucleus that triggers genetically controlled PCD pathway is unique to photosynthetic eukaryotes and operates under mild stress conditions, impeding photosystem II (PSII) without causing photooxidative damage of the plant. This chain is Protein EXECUTER 2, chloroplastic, found in Oryza sativa subsp. japonica (Rice).